A 172-amino-acid chain; its full sequence is Envelope protein UL45 (172 aa).

Topologically, residues 1–27 are intravirion; sequence MPLRASEHAYRPLGPGTPPMRARLPAA. A helical; Signal-anchor for type II membrane protein membrane pass occupies residues 28–48; sequence AWVGVGTIIGGVVIIAALVLV. At 49–172 the chain is on the virion surface side; it reads PSRASWALSP…TSTRNALGLP (124 aa).

This sequence belongs to the herpesviridae HHV-1 UL45 family.

Its subcellular location is the virion membrane. Its function is as follows. Important virulence factor of HSV neurotropism. Seems to be required for glycoprotein B-induced fusion. Dispensable for growth in vitro. In Human herpesvirus 1 (strain KOS) (HHV-1), this protein is Envelope protein UL45.